The primary structure comprises 597 residues: Arginine--tRNA ligase (597 aa).

Residues 124–134 (PNVAKPLHVGH) carry the 'HIGH' region motif.

The protein belongs to the class-I aminoacyl-tRNA synthetase family. In terms of assembly, monomer.

It is found in the cytoplasm. The enzyme catalyses tRNA(Arg) + L-arginine + ATP = L-arginyl-tRNA(Arg) + AMP + diphosphate. This Agathobacter rectalis (strain ATCC 33656 / DSM 3377 / JCM 17463 / KCTC 5835 / VPI 0990) (Eubacterium rectale) protein is Arginine--tRNA ligase.